Consider the following 123-residue polypeptide: MAVSGSHRPLTGPQAESWTAEYLTARGLRLIERNYRCRLGEIDLVMAEGATLVFVEVRYRSGKRYGGALASVDRHKCRRLLATAQHYMVEHRVTGAVRLDVVAVSPGAAGPQAEWIRNAIEAQ.

Belongs to the UPF0102 family.

This Methylococcus capsulatus (strain ATCC 33009 / NCIMB 11132 / Bath) protein is UPF0102 protein MCA0184.